A 78-amino-acid chain; its full sequence is Large ribosomal subunit protein bL28 (78 aa).

Residues 1–20 (MSRVCQVTGKGPVTGNNISH) form a disordered region.

This sequence belongs to the bacterial ribosomal protein bL28 family.

This is Large ribosomal subunit protein bL28 from Pseudomonas putida (strain ATCC 700007 / DSM 6899 / JCM 31910 / BCRC 17059 / LMG 24140 / F1).